The following is a 148-amino-acid chain: Probable histone H2B.2 (148 aa).

Positions 1–32 (MAPKGEKKPAEKKPAEEKKSTVAEKAPAEKKP) are enriched in basic and acidic residues. The segment at 1–57 (MAPKGEKKPAEKKPAEEKKSTVAEKAPAEKKPKAGKKLPKEGGSAAGEKKKKRSKKS) is disordered. 3 positions are modified to N6-acetyllysine: Lys-7, Lys-36, and Lys-37. Residue Lys-144 forms a Glycyl lysine isopeptide (Lys-Gly) (interchain with G-Cter in ubiquitin) linkage.

This sequence belongs to the histone H2B family. The nucleosome is a histone octamer containing two molecules each of H2A, H2B, H3 and H4 assembled in one H3-H4 heterotetramer and two H2A-H2B heterodimers. The octamer wraps approximately 147 bp of DNA. In terms of processing, can be acetylated to form H2BK6ac, H2BK33ac and H2BK34ac. Monoubiquitinated to form H2BK143ub1; may give a specific tag for epigenetic transcriptional activation.

It is found in the nucleus. The protein localises to the chromosome. Core component of nucleosome. Nucleosomes wrap and compact DNA into chromatin, limiting DNA accessibility to the cellular machineries which require DNA as a template. Histones thereby play a central role in transcription regulation, DNA repair, DNA replication and chromosomal stability. DNA accessibility is regulated via a complex set of post-translational modifications of histones, also called histone code, and nucleosome remodeling. In Medicago truncatula (Barrel medic), this protein is Probable histone H2B.2.